The following is a 139-amino-acid chain: Large ribosomal subunit protein mL54 (139 aa).

A mitochondrion-targeting transit peptide spans 1–50 (MPFIESMAPLSRAITRGISQFSCYSNTLVLRSSRNSSSSLVKRSYVSSRV). Residues 35–50 (NSSSSLVKRSYVSSRV) show a composition bias toward low complexity. Residues 35-74 (NSSSSLVKRSYVSSRVSPKKPQHNSDATSSAQKVANKTHT) are disordered. Over residues 58 to 74 (NSDATSSAQKVANKTHT) the composition is skewed to polar residues.

Belongs to the mitochondrion-specific ribosomal protein mL54 family. As to quaternary structure, component of the mitochondrial large ribosomal subunit (mt-LSU). Mature yeast 74S mitochondrial ribosomes consist of a small (37S) and a large (54S) subunit. The 37S small subunit contains a 15S ribosomal RNA (15S mt-rRNA) and at least 32 different proteins. The 54S large subunit contains a 21S rRNA (21S mt-rRNA) and at least 45 different proteins.

It is found in the mitochondrion. In terms of biological role, component of the mitochondrial ribosome (mitoribosome), a dedicated translation machinery responsible for the synthesis of mitochondrial genome-encoded proteins, including at least some of the essential transmembrane subunits of the mitochondrial respiratory chain. The mitoribosomes are attached to the mitochondrial inner membrane and translation products are cotranslationally integrated into the membrane. mL54 may have a meiosis-specific role as it accumulates during the middle stage of sporulation. This Schizosaccharomyces pombe (strain 972 / ATCC 24843) (Fission yeast) protein is Large ribosomal subunit protein mL54 (mrpl37).